A 291-amino-acid chain; its full sequence is Protease HtpX homolog (291 aa).

2 helical membrane passes run 4–24 (IALF…TASL) and 38–58 (LGAL…ISLL). H144 lines the Zn(2+) pocket. E145 is a catalytic residue. H148 provides a ligand contact to Zn(2+). A run of 2 helical transmembrane segments spans residues 159–179 (LIQG…GYFI) and 197–217 (VTTV…VAWF). Zn(2+) is bound at residue E222.

It belongs to the peptidase M48B family. It depends on Zn(2+) as a cofactor.

The protein resides in the cell inner membrane. The protein is Protease HtpX homolog of Leptothrix cholodnii (strain ATCC 51168 / LMG 8142 / SP-6) (Leptothrix discophora (strain SP-6)).